Reading from the N-terminus, the 193-residue chain is MARARQEGSSPEPVEGLARDGPRPFPLGRLVPSAVSCGLCEPGLAAAPAAPTLLPAAYLCAPTAPPAVTAALGGSRWPGGPRSRPRGPRPDGPQPSLSLAEQHLESPVPSAPGALAGGPTQAAPGVRGEEEQWAREIGAQLRRMADDLNAQYERRRQEEQQRHRPSPWRVLYNLIMGLLPLPRGHRAPEMEPN.

Disordered regions lie at residues 1 to 28 (MARARQEGSSPEPVEGLARDGPRPFPLG) and 71 to 138 (ALGG…REIG). Ser10 is modified (phosphoserine). Positions 71–82 (ALGGSRWPGGPR) are enriched in low complexity. The short motif at 137–151 (IGAQLRRMADDLNAQ) is the BH3 element.

It belongs to the Bcl-2 family. As to quaternary structure, interacts with MCL1 and BCL2A1. Interacts (via BH3 domain) with BCL2. Interacts with BCL2L1/BCL-XL. Interacts (via BH3 domain) with NOL3/ARC (via CARD domain); this interaction prevents BBC3 association with BCL2 and results in CASP8 activation. In terms of tissue distribution, ubiquitously expressed.

The protein localises to the mitochondrion. Essential mediator of p53/TP53-dependent and p53/TP53-independent apoptosis. Promotes partial unfolding of BCL2L1 and dissociation of BCL2L1 from p53/TP53, releasing the bound p53/TP53 to induce apoptosis. Regulates ER stress-induced neuronal apoptosis. This is Bcl-2-binding component 3, isoforms 1/2 (BBC3) from Homo sapiens (Human).